The primary structure comprises 241 residues: Ribonuclease PH (241 aa).

Phosphate-binding positions include Arg89 and 127–129; that span reads GTR.

This sequence belongs to the RNase PH family. Homohexameric ring arranged as a trimer of dimers.

The enzyme catalyses tRNA(n+1) + phosphate = tRNA(n) + a ribonucleoside 5'-diphosphate. Its function is as follows. Phosphorolytic 3'-5' exoribonuclease that plays an important role in tRNA 3'-end maturation. Removes nucleotide residues following the 3'-CCA terminus of tRNAs; can also add nucleotides to the ends of RNA molecules by using nucleoside diphosphates as substrates, but this may not be physiologically important. Probably plays a role in initiation of 16S rRNA degradation (leading to ribosome degradation) during starvation. The protein is Ribonuclease PH of Stenotrophomonas maltophilia (strain K279a).